The following is a 75-amino-acid chain: Small ribosomal subunit protein bS21A (75 aa).

This sequence belongs to the bacterial ribosomal protein bS21 family.

This chain is Small ribosomal subunit protein bS21A (rpsU1), found in Agrobacterium fabrum (strain C58 / ATCC 33970) (Agrobacterium tumefaciens (strain C58)).